The following is a 158-amino-acid chain: SsrA-binding protein (158 aa).

This sequence belongs to the SmpB family.

The protein localises to the cytoplasm. In terms of biological role, required for rescue of stalled ribosomes mediated by trans-translation. Binds to transfer-messenger RNA (tmRNA), required for stable association of tmRNA with ribosomes. tmRNA and SmpB together mimic tRNA shape, replacing the anticodon stem-loop with SmpB. tmRNA is encoded by the ssrA gene; the 2 termini fold to resemble tRNA(Ala) and it encodes a 'tag peptide', a short internal open reading frame. During trans-translation Ala-aminoacylated tmRNA acts like a tRNA, entering the A-site of stalled ribosomes, displacing the stalled mRNA. The ribosome then switches to translate the ORF on the tmRNA; the nascent peptide is terminated with the 'tag peptide' encoded by the tmRNA and targeted for degradation. The ribosome is freed to recommence translation, which seems to be the essential function of trans-translation. In Saccharopolyspora erythraea (strain ATCC 11635 / DSM 40517 / JCM 4748 / NBRC 13426 / NCIMB 8594 / NRRL 2338), this protein is SsrA-binding protein.